The chain runs to 214 residues: Probable GTP-binding protein EngB (214 aa).

An EngB-type G domain is found at 31-214 (GPPEIAFAGR…LRAAILQTIA (184 aa)). Residues 39 to 46 (GRSNVGKS), 66 to 70 (GRTQE), 93 to 96 (DMPG), 160 to 163 (TKSD), and 194 to 196 (TSS) contribute to the GTP site. Positions 46 and 68 each coordinate Mg(2+).

The protein belongs to the TRAFAC class TrmE-Era-EngA-EngB-Septin-like GTPase superfamily. EngB GTPase family. Mg(2+) is required as a cofactor.

In terms of biological role, necessary for normal cell division and for the maintenance of normal septation. This is Probable GTP-binding protein EngB from Bartonella tribocorum (strain CIP 105476 / IBS 506).